Reading from the N-terminus, the 285-residue chain is Small ribosomal subunit biogenesis GTPase RsgA (285 aa).

A CP-type G domain is found at 61 to 215; sequence KNQLIRPKVA…IIDSPGFSSF (155 aa). Residues 110–113 and 159–167 each bind GTP; these read TKID and GQTGVGKTS. Positions 239, 244, 246, and 254 each coordinate Zn(2+).

Belongs to the TRAFAC class YlqF/YawG GTPase family. RsgA subfamily. As to quaternary structure, monomer. Associates with 30S ribosomal subunit, binds 16S rRNA. The cofactor is Zn(2+).

Its subcellular location is the cytoplasm. In terms of biological role, one of several proteins that assist in the late maturation steps of the functional core of the 30S ribosomal subunit. Helps release RbfA from mature subunits. May play a role in the assembly of ribosomal proteins into the subunit. Circularly permuted GTPase that catalyzes slow GTP hydrolysis, GTPase activity is stimulated by the 30S ribosomal subunit. This chain is Small ribosomal subunit biogenesis GTPase RsgA, found in Mesomycoplasma hyopneumoniae (strain 7448) (Mycoplasma hyopneumoniae).